Reading from the N-terminus, the 489-residue chain is GTPase Der (489 aa).

2 EngA-type G domains span residues 3–166 (PVVA…AEAM) and 200–373 (IKLA…ESAT). Residues 9-16 (GRPNVGKS), 56-60 (DTGGI), 118-121 (NKVD), 206-213 (GKPNVGKS), 253-257 (DTAGV), and 318-321 (NKWD) contribute to the GTP site. Residues 374 to 458 (RRVSTSMLTR…PIQVRFQEGG (85 aa)) enclose the KH-like domain.

It belongs to the TRAFAC class TrmE-Era-EngA-EngB-Septin-like GTPase superfamily. EngA (Der) GTPase family. In terms of assembly, associates with the 50S ribosomal subunit.

GTPase that plays an essential role in the late steps of ribosome biogenesis. The polypeptide is GTPase Der (Shewanella loihica (strain ATCC BAA-1088 / PV-4)).